A 467-amino-acid chain; its full sequence is Histidine--tRNA ligase (467 aa).

This sequence belongs to the class-II aminoacyl-tRNA synthetase family. In terms of assembly, homodimer.

The protein resides in the cytoplasm. It carries out the reaction tRNA(His) + L-histidine + ATP = L-histidyl-tRNA(His) + AMP + diphosphate + H(+). The polypeptide is Histidine--tRNA ligase (Gloeobacter violaceus (strain ATCC 29082 / PCC 7421)).